Consider the following 414-residue polypeptide: tRNA N6-adenosine threonylcarbamoyltransferase, mitochondrial (414 aa).

Residues M1–H29 constitute a mitochondrion transit peptide. An N6-acetyllysine mark is found at K74 and K140. 2 residues coordinate a divalent metal cation: H147 and H151. Substrate-binding positions include L169–G173 and D202. K203 carries the N6-acetyllysine modification. Positions 222 and 226 each coordinate substrate. N6-acetyllysine occurs at positions 230, 240, and 299. Residues S329–N330 and T357 each bind substrate. D358 contributes to the a divalent metal cation binding site.

Belongs to the KAE1 / TsaD family. As to quaternary structure, monomer. It depends on a divalent metal cation as a cofactor. Widely expressed, with maximum expression in pituitary gland, prostate, rectum and uterus.

The protein resides in the mitochondrion. It catalyses the reaction L-threonylcarbamoyladenylate + adenosine(37) in tRNA = N(6)-L-threonylcarbamoyladenosine(37) in tRNA + AMP + H(+). Its function is as follows. Required for the formation of a threonylcarbamoyl group on adenosine at position 37 (t(6)A37) in mitochondrial tRNAs that read codons beginning with adenine. Probably involved in the transfer of the threonylcarbamoyl moiety of threonylcarbamoyl-AMP (TC-AMP) to the N6 group of A37. Involved in mitochondrial genome maintenance. This chain is tRNA N6-adenosine threonylcarbamoyltransferase, mitochondrial, found in Homo sapiens (Human).